The sequence spans 222 residues: Pyrrolidone-carboxylate peptidase (222 aa).

Residues E80, C146, and H170 contribute to the active site.

This sequence belongs to the peptidase C15 family. Homotetramer.

The protein localises to the cytoplasm. It catalyses the reaction Release of an N-terminal pyroglutamyl group from a polypeptide, the second amino acid generally not being Pro.. In terms of biological role, removes 5-oxoproline from various penultimate amino acid residues except L-proline. In Mycobacterium marinum (strain ATCC BAA-535 / M), this protein is Pyrrolidone-carboxylate peptidase.